Consider the following 342-residue polypeptide: Succinoglycan biosynthesis protein ExoU (342 aa).

It belongs to the glycosyltransferase 2 family.

The protein localises to the cytoplasm. It participates in glycan metabolism; exopolysaccharide biosynthesis. Glycosyltransferase required for the synthesis of succinoglycan (EPS I). Needed for the addition of the sixth sugar (glucose), catalyzes the formation of a beta-1,6 linkage between the fifth and sixth sugar. This chain is Succinoglycan biosynthesis protein ExoU (exoU), found in Rhizobium meliloti (strain 1021) (Ensifer meliloti).